The chain runs to 355 residues: MQKKVLFNDIVFVCFPITDNGSIIISDIGYSDDGYNRPTGRQGTIENGDPYRITVPAGYSYTNKNVQNGNMIRLVRVNDSKNGCWYNGSGDGWLEIRDYVGPDWRADWTVQIINPANNDNSLYYGQHFRLMNRAQVENPTFQGPSDFASIALWGSNNTNNSVMMLLNGPLDTAKLECCKDNPIFTQPDYCANYRGTTCSGQCDDILSNYCAQVTTTDPKCGCLLPASFYTQNSAIGPPECIDDRCVDTNSYRKSTQCHPNCQIVDCDININDFNGTNINKIVYEQECGSKSTPNGPNGPTPTPSNGPNGPTPVPGIPPANGSSTSFFSRYGLWIIIAIILLIVIISAVGIYFYLR.

A signal peptide spans 1–21 (MQKKVLFNDIVFVCFPITDNG). Residues asparagine 20, asparagine 78, asparagine 87, asparagine 156, asparagine 159, and asparagine 274 are each glycosylated (N-linked (GlcNAc...) asparagine; by host). Topologically, residues 22–331 (SIIISDIGYS…SSTSFFSRYG (310 aa)) are virion surface. The disordered stretch occupies residues 288–317 (GSKSTPNGPNGPTPTPSNGPNGPTPVPGIP). Positions 296–317 (PNGPTPTPSNGPNGPTPVPGIP) are enriched in pro residues. N-linked (GlcNAc...) asparagine; by host glycosylation is present at asparagine 320. A helical membrane pass occupies residues 332 to 352 (LWIIIAIILLIVIISAVGIYF). Residues 353 to 355 (YLR) lie on the Intravirion side of the membrane.

The protein resides in the host membrane. The protein localises to the virion. This is an uncharacterized protein from Acanthamoeba polyphaga mimivirus (APMV).